A 333-amino-acid chain; its full sequence is MKSAKQIATALLVGMFTFSAVGCSMVEKRPEAINSKVVATIYGNQTITRGEIDKLAKGTVEQLKSQYGDSYEKNEEAVAALKKQKEQILTSLIDQKIFLKKAKDQKITLTKDEIKTNVDDVYAQYQQEFKTESEFKSQLSQYGYTVAEFKDQLKNRAISNKLIQQVVKDVKVSDDEAKKYYDSHKNSYTQSPNTVHLAHILVKTEKEAKAVKARIDKGEDFATVAKQVSTDGSKEKGGDLGDIQENDSNYDKTFMAAALKLNDNQVSAPVHTQFGWHVIKCIKKTEYPVKDFNSVKDDIKQTVLSTKQKSVYQKTLKKWESQANIDKNEKNLM.

Positions 1-22 are cleaved as a signal peptide; that stretch reads MKSAKQIATALLVGMFTFSAVG. Cys-23 carries the N-palmitoyl cysteine lipid modification. Residue Cys-23 is the site of S-diacylglycerol cysteine attachment. Residues 192 to 283 form the PpiC domain; sequence PNTVHLAHIL…FGWHVIKCIK (92 aa).

Belongs to the PrsA family.

It localises to the cell membrane. It catalyses the reaction [protein]-peptidylproline (omega=180) = [protein]-peptidylproline (omega=0). Functionally, plays a major role in protein secretion by helping the post-translocational extracellular folding of several secreted proteins. The sequence is that of Foldase protein PrsA from Clostridium acetobutylicum (strain ATCC 824 / DSM 792 / JCM 1419 / IAM 19013 / LMG 5710 / NBRC 13948 / NRRL B-527 / VKM B-1787 / 2291 / W).